The following is a 102-amino-acid chain: Small ribosomal subunit protein eS24 (102 aa).

This sequence belongs to the eukaryotic ribosomal protein eS24 family.

In Methanococcus aeolicus (strain ATCC BAA-1280 / DSM 17508 / OCM 812 / Nankai-3), this protein is Small ribosomal subunit protein eS24.